The following is a 126-amino-acid chain: Glycine cleavage system H protein (126 aa).

Positions 21–103 (TATIGISEHA…YEGGWIVKVK (83 aa)) constitute a Lipoyl-binding domain. N6-lipoyllysine is present on Lys-62.

This sequence belongs to the GcvH family. As to quaternary structure, the glycine cleavage system is composed of four proteins: P, T, L and H. The cofactor is (R)-lipoate.

Functionally, the glycine cleavage system catalyzes the degradation of glycine. The H protein shuttles the methylamine group of glycine from the P protein to the T protein. The polypeptide is Glycine cleavage system H protein (Vibrio campbellii (strain ATCC BAA-1116)).